The following is a 197-amino-acid chain: Imidazoleglycerol-phosphate dehydratase (197 aa).

This sequence belongs to the imidazoleglycerol-phosphate dehydratase family.

The protein resides in the cytoplasm. It catalyses the reaction D-erythro-1-(imidazol-4-yl)glycerol 3-phosphate = 3-(imidazol-4-yl)-2-oxopropyl phosphate + H2O. It participates in amino-acid biosynthesis; L-histidine biosynthesis; L-histidine from 5-phospho-alpha-D-ribose 1-diphosphate: step 6/9. The sequence is that of Imidazoleglycerol-phosphate dehydratase from Saccharophagus degradans (strain 2-40 / ATCC 43961 / DSM 17024).